The primary structure comprises 209 residues: Uracil phosphoribosyltransferase (209 aa).

Residues R79, R104, and 131 to 139 (DPMLATGGS) each bind 5-phospho-alpha-D-ribose 1-diphosphate. Uracil is bound by residues I194 and 199 to 201 (GDA). D200 is a 5-phospho-alpha-D-ribose 1-diphosphate binding site.

This sequence belongs to the UPRTase family. Requires Mg(2+) as cofactor.

It carries out the reaction UMP + diphosphate = 5-phospho-alpha-D-ribose 1-diphosphate + uracil. Its pathway is pyrimidine metabolism; UMP biosynthesis via salvage pathway; UMP from uracil: step 1/1. Allosterically activated by GTP. Catalyzes the conversion of uracil and 5-phospho-alpha-D-ribose 1-diphosphate (PRPP) to UMP and diphosphate. The polypeptide is Uracil phosphoribosyltransferase (Streptococcus pyogenes serotype M1).